We begin with the raw amino-acid sequence, 681 residues long: Sodium-dependent phosphate transporter 1 (681 aa).

6 helical membrane-spanning segments follow: residues 25–45, 66–86, 106–126, 162–182, 201–221, and 234–254; these read NLWMLILGFIIAFVLAFSVGA, ACILASIFETVGSALLGAKVS, LMAGSVSAMFGSAVWQLVASF, IVMSWFVSPLLSGIMSGILFF, ALPIFYACTIGINLFSIMYTG, and GTILISVGCAVFCALIVWFFV. The segment at 266–295 is disordered; the sequence is VKSSPSESPLMEKKSNLKEDHEETKMAPGD. Phosphoserine is present on residues S269 and S273. Residues 275 to 295 show a composition bias toward basic and acidic residues; the sequence is LMEKKSNLKEDHEETKMAPGD. A helical transmembrane segment spans residues 514–534; it reads VSLLFQFLQILTACFGSFAHG. The segment at 553 to 560 is a; the sequence is KQEASTKA. The next 3 helical transmembrane spans lie at 561–581, 602–622, and 652–672; these read ATPIWLLLYGGVGICMGLWVW, FSIELASALTVVIASNIGLPI, and IFMAWFVTVPISGVISAAIMA.

Belongs to the inorganic phosphate transporter (PiT) (TC 2.A.20) family. Ubiquitously expressed.

It is found in the cell membrane. The catalysed reaction is 2 Na(+)(out) + phosphate(out) = 2 Na(+)(in) + phosphate(in). Functionally, sodium-phosphate symporter which preferentially transports the monovalent form of phosphate with a stoichiometry of two sodium ions per phosphate ion. May play a role in extracellular matrix and cartilage calcification as well as in vascular calcification. Essential for cell proliferation but this function is independent of its phosphate transporter activity. Its function is as follows. (Microbial infection) May function as a retroviral receptor but do not confer infection susceptibility to Gibbon Ape Leukemia Virus (GaLV), Simian sarcoma-associated virus (SSAV) and Feline leukemia virus subgroup B (FeLV-B). This is Sodium-dependent phosphate transporter 1 (Slc20a1) from Mus musculus (Mouse).